A 339-amino-acid polypeptide reads, in one-letter code: MKIVIDLMGADHGVLPIIEGVSRALENKSFSVVLVGDKDKATPFISKELASKVEMIHTQDYIKMEEAATEAIKRKESSIYLGMDILKNGADALISAGHSGATMGLATLRLGRIKGVERPAICTLMPSVGKRPSVLLDAGANTDCKPEYLIDFALMGYEYAKSVLHYDSPKVGLLSNGEEDIKGNTLVKETHKMLKAYDFFYGNVEGSDIFKGVVDVVVCDGFMGNVVLKTTEGVASAIGSIFKDEIKSSFKSKMGALMLKNAFGILKQKTDYAEYGGAPLLGVNKSVIISHGKSNARAVECAIYQAISAVESQVCLRITQAFESLKSQSFESQSDQQDA.

Belongs to the PlsX family. As to quaternary structure, homodimer. Probably interacts with PlsY.

It localises to the cytoplasm. It carries out the reaction a fatty acyl-[ACP] + phosphate = an acyl phosphate + holo-[ACP]. It functions in the pathway lipid metabolism; phospholipid metabolism. In terms of biological role, catalyzes the reversible formation of acyl-phosphate (acyl-PO(4)) from acyl-[acyl-carrier-protein] (acyl-ACP). This enzyme utilizes acyl-ACP as fatty acyl donor, but not acyl-CoA. The polypeptide is Phosphate acyltransferase (Helicobacter pylori (strain J99 / ATCC 700824) (Campylobacter pylori J99)).